The following is a 219-amino-acid chain: uncharacterized protein (219 aa).

Residues 42 to 71 (RQPRVVPVTSSDPEVVDDEDDEDQSDDSDE) are disordered. A compositionally biased stretch (low complexity) spans 45–54 (RVVPVTSSDP). Residues 55–71 (EVVDDEDDEDQSDDSDE) show a composition bias toward acidic residues.

This is an uncharacterized protein from Dryophytes versicolor (chameleon treefrog).